Here is a 194-residue protein sequence, read N- to C-terminus: MRTATKTRVTAETSIELSINLDSQVESTISTGVGFLDHMLTLFAKHSRVTLNVKADGDTYVDAHHTVEDIGITLGLCLKEALADKASINRYGSAYVPMDESLGFCALDLSGRSYLVFDAELTNPKLGDFDTELVEEFFQAVAFNTEMNLHLRVLYGKNTHHKIEALFKAFGRALREAITINPEIKGVNSTKGVL.

This sequence belongs to the imidazoleglycerol-phosphate dehydratase family.

It is found in the cytoplasm. It catalyses the reaction D-erythro-1-(imidazol-4-yl)glycerol 3-phosphate = 3-(imidazol-4-yl)-2-oxopropyl phosphate + H2O. It participates in amino-acid biosynthesis; L-histidine biosynthesis; L-histidine from 5-phospho-alpha-D-ribose 1-diphosphate: step 6/9. The sequence is that of Imidazoleglycerol-phosphate dehydratase from Listeria monocytogenes serovar 1/2a (strain ATCC BAA-679 / EGD-e).